A 558-amino-acid chain; its full sequence is Ribonuclease Y (558 aa).

Residues 3 to 23 (VLSILLILVAVGVGIFVGRQF) form a helical membrane-spanning segment. The KH domain maps to 248–311 (TTTTVELPSN…EIAKEALQRL (64 aa)). Residues 374 to 467 (VLLHSKEVAY…VCAADALSAA (94 aa)) enclose the HD domain.

It belongs to the RNase Y family.

The protein resides in the cell membrane. Its function is as follows. Endoribonuclease that initiates mRNA decay. This Aquifex aeolicus (strain VF5) protein is Ribonuclease Y.